The chain runs to 592 residues: 2-succinyl-5-enolpyruvyl-6-hydroxy-3-cyclohexene-1-carboxylate synthase (592 aa).

The protein belongs to the TPP enzyme family. MenD subfamily. As to quaternary structure, homodimer. It depends on Mg(2+) as a cofactor. Mn(2+) is required as a cofactor. The cofactor is thiamine diphosphate.

It carries out the reaction isochorismate + 2-oxoglutarate + H(+) = 5-enolpyruvoyl-6-hydroxy-2-succinyl-cyclohex-3-ene-1-carboxylate + CO2. Its pathway is quinol/quinone metabolism; 1,4-dihydroxy-2-naphthoate biosynthesis; 1,4-dihydroxy-2-naphthoate from chorismate: step 2/7. It participates in quinol/quinone metabolism; menaquinone biosynthesis. In terms of biological role, catalyzes the thiamine diphosphate-dependent decarboxylation of 2-oxoglutarate and the subsequent addition of the resulting succinic semialdehyde-thiamine pyrophosphate anion to isochorismate to yield 2-succinyl-5-enolpyruvyl-6-hydroxy-3-cyclohexene-1-carboxylate (SEPHCHC). The chain is 2-succinyl-5-enolpyruvyl-6-hydroxy-3-cyclohexene-1-carboxylate synthase from Haloarcula marismortui (strain ATCC 43049 / DSM 3752 / JCM 8966 / VKM B-1809) (Halobacterium marismortui).